A 180-amino-acid polypeptide reads, in one-letter code: Large ribosomal subunit protein uL5 (180 aa).

Belongs to the universal ribosomal protein uL5 family. As to quaternary structure, part of the 50S ribosomal subunit; part of the 5S rRNA/L5/L18/L25 subcomplex. Contacts the 5S rRNA and the P site tRNA. Forms a bridge to the 30S subunit in the 70S ribosome.

Functionally, this is one of the proteins that bind and probably mediate the attachment of the 5S RNA into the large ribosomal subunit, where it forms part of the central protuberance. In the 70S ribosome it contacts protein S13 of the 30S subunit (bridge B1b), connecting the 2 subunits; this bridge is implicated in subunit movement. Contacts the P site tRNA; the 5S rRNA and some of its associated proteins might help stabilize positioning of ribosome-bound tRNAs. This chain is Large ribosomal subunit protein uL5, found in Lactococcus lactis subsp. lactis (strain IL1403) (Streptococcus lactis).